We begin with the raw amino-acid sequence, 205 residues long: Putative 3-methyladenine DNA glycosylase (205 aa).

Belongs to the DNA glycosylase MPG family.

The polypeptide is Putative 3-methyladenine DNA glycosylase (Bacillus cereus (strain ZK / E33L)).